We begin with the raw amino-acid sequence, 268 residues long: Universal stress protein MT3220 (268 aa).

ATP is bound by residues Gly13, Gly107–His113, Arg117, and Ser120–Val121.

This sequence belongs to the universal stress protein A family.

This is Universal stress protein MT3220 from Mycobacterium tuberculosis (strain CDC 1551 / Oshkosh).